We begin with the raw amino-acid sequence, 305 residues long: Ribosomal RNA small subunit methyltransferase H (305 aa).

Residues 37 to 39, aspartate 57, phenylalanine 85, aspartate 101, and histidine 108 contribute to the S-adenosyl-L-methionine site; that span reads GGH.

It belongs to the methyltransferase superfamily. RsmH family.

It localises to the cytoplasm. The catalysed reaction is cytidine(1402) in 16S rRNA + S-adenosyl-L-methionine = N(4)-methylcytidine(1402) in 16S rRNA + S-adenosyl-L-homocysteine + H(+). Specifically methylates the N4 position of cytidine in position 1402 (C1402) of 16S rRNA. This Parabacteroides distasonis (strain ATCC 8503 / DSM 20701 / CIP 104284 / JCM 5825 / NCTC 11152) protein is Ribosomal RNA small subunit methyltransferase H.